A 362-amino-acid chain; its full sequence is Outer envelope protein 39, chloroplastic (362 aa).

It belongs to the OEP80 (TC 1.B.33.2) family. As to expression, expressed in germinating seeds. Expressed in the vasculature of roots, cotyledons and leaves.

The protein resides in the plastid. The protein localises to the chloroplast outer membrane. In terms of biological role, beta-barrel pore-forming protein which possesses voltage-dependent channel activity. Required for proper plastid development. Involved in the maintenance of metabolic homeostasis of full-grown plants. The chain is Outer envelope protein 39, chloroplastic from Arabidopsis thaliana (Mouse-ear cress).